Here is a 307-residue protein sequence, read N- to C-terminus: NAD kinase 1 (307 aa).

Asp67 functions as the Proton acceptor in the catalytic mechanism. NAD(+)-binding positions include 67–68 (DG), 149–150 (ND), Arg179, and Asp181.

It belongs to the NAD kinase family. It depends on a divalent metal cation as a cofactor.

It is found in the cytoplasm. It carries out the reaction NAD(+) + ATP = ADP + NADP(+) + H(+). Functionally, involved in the regulation of the intracellular balance of NAD and NADP, and is a key enzyme in the biosynthesis of NADP. Catalyzes specifically the phosphorylation on 2'-hydroxyl of the adenosine moiety of NAD to yield NADP. The protein is NAD kinase 1 of Prochlorococcus marinus (strain SARG / CCMP1375 / SS120).